A 127-amino-acid chain; its full sequence is Major sperm protein 77/79 (127 aa).

An N-acetylalanine modification is found at A2. The MSP domain maps to 9–126 (DIQTQPGTKI…RRKNLPIEYN (118 aa)).

In terms of tissue distribution, sperm.

It localises to the cell projection. Its subcellular location is the pseudopodium. It is found in the cytoplasm. The protein resides in the cytoskeleton. Its function is as follows. Central component in molecular interactions underlying sperm crawling. Forms an extensive filament system that extends from sperm villipoda, along the leading edge of the pseudopod. The polypeptide is Major sperm protein 77/79 (msp-77) (Caenorhabditis elegans).